Here is a 204-residue protein sequence, read N- to C-terminus: FMN-dependent NADH:quinone oxidoreductase (204 aa).

FMN contacts are provided by residues serine 10 and 15–17 (SLS).

Belongs to the azoreductase type 1 family. As to quaternary structure, homodimer. It depends on FMN as a cofactor.

The enzyme catalyses 2 a quinone + NADH + H(+) = 2 a 1,4-benzosemiquinone + NAD(+). It catalyses the reaction N,N-dimethyl-1,4-phenylenediamine + anthranilate + 2 NAD(+) = 2-(4-dimethylaminophenyl)diazenylbenzoate + 2 NADH + 2 H(+). Its function is as follows. Quinone reductase that provides resistance to thiol-specific stress caused by electrophilic quinones. Functionally, also exhibits azoreductase activity. Catalyzes the reductive cleavage of the azo bond in aromatic azo compounds to the corresponding amines. The polypeptide is FMN-dependent NADH:quinone oxidoreductase (Rhizobium johnstonii (strain DSM 114642 / LMG 32736 / 3841) (Rhizobium leguminosarum bv. viciae)).